A 67-amino-acid polypeptide reads, in one-letter code: ATP synthase protein 8 (67 aa).

A helical transmembrane segment spans residues 8-24 (TWSITIMSMIMTLFIVF). K54 carries the post-translational modification N6-acetyllysine; alternate. N6-succinyllysine; alternate is present on K54. K57 bears the N6-acetyllysine mark.

Belongs to the ATPase protein 8 family. F-type ATPases have 2 components, CF(1) - the catalytic core - and CF(0) - the membrane proton channel. Component of an ATP synthase complex composed of ATP5PB, ATP5MC1, ATP5F1E, ATP5PD, ATP5ME, ATP5PF, ATP5MF, MT-ATP6, MT-ATP8, ATP5F1A, ATP5F1B, ATP5F1D, ATP5F1C, ATP5PO, ATP5MG, ATP5MK and ATP5MJ. Interacts with PRICKLE3.

The protein localises to the mitochondrion membrane. Its function is as follows. Mitochondrial membrane ATP synthase (F(1)F(0) ATP synthase or Complex V) produces ATP from ADP in the presence of a proton gradient across the membrane which is generated by electron transport complexes of the respiratory chain. F-type ATPases consist of two structural domains, F(1) - containing the extramembraneous catalytic core and F(0) - containing the membrane proton channel, linked together by a central stalk and a peripheral stalk. During catalysis, ATP synthesis in the catalytic domain of F(1) is coupled via a rotary mechanism of the central stalk subunits to proton translocation. Part of the complex F(0) domain. Minor subunit located with subunit a in the membrane. In Felis silvestris lybica (African wildcat), this protein is ATP synthase protein 8 (MT-ATP8).